Consider the following 189-residue polypeptide: uncharacterized protein (189 aa).

The segment covering 105–115 (EKLEKEEESKT) has biased composition (basic and acidic residues). The tract at residues 105-189 (EKLEKEEESK…TDDEKTEVST (85 aa)) is disordered. Basic residues predominate over residues 116–136 (AKKRAKRLRQKAAAKKRKLTK). Acidic residues predominate over residues 141 to 151 (SDESSSDDSDS). Residues 161 to 177 (SEGKQNTEVEDKDKVEK) show a composition bias toward basic and acidic residues. Residues 178–189 (EETDDEKTEVST) are compositionally biased toward acidic residues.

This is an uncharacterized protein from Caenorhabditis elegans.